The chain runs to 201 residues: Ribonuclease HII (201 aa).

Residues 14 to 201 (NLIAGVDEVG…KPVKRILGIE (188 aa)) enclose the RNase H type-2 domain. A divalent metal cation contacts are provided by Asp20, Glu21, and Asp112.

Belongs to the RNase HII family. Mn(2+) is required as a cofactor. Mg(2+) serves as cofactor.

Its subcellular location is the cytoplasm. It catalyses the reaction Endonucleolytic cleavage to 5'-phosphomonoester.. Functionally, endonuclease that specifically degrades the RNA of RNA-DNA hybrids. The protein is Ribonuclease HII of Photobacterium profundum (strain SS9).